We begin with the raw amino-acid sequence, 453 residues long: tRNA modification GTPase MnmE (453 aa).

Residues Arg22, Glu79, and Lys119 each contribute to the (6S)-5-formyl-5,6,7,8-tetrahydrofolate site. Residues 215-376 (GMKVVIAGRP…LRNHLKECMG (162 aa)) enclose the TrmE-type G domain. A K(+)-binding site is contributed by Asn225. GTP-binding positions include 225–230 (NAGKSS), 244–250 (TDIAGTT), 269–272 (DTAG), and 334–337 (NKAD). Ser229 serves as a coordination point for Mg(2+). The K(+) site is built by Thr244, Ile246, and Thr249. Thr250 provides a ligand contact to Mg(2+). Lys453 is a (6S)-5-formyl-5,6,7,8-tetrahydrofolate binding site.

Belongs to the TRAFAC class TrmE-Era-EngA-EngB-Septin-like GTPase superfamily. TrmE GTPase family. As to quaternary structure, homodimer. Heterotetramer of two MnmE and two MnmG subunits. K(+) is required as a cofactor.

It is found in the cytoplasm. Exhibits a very high intrinsic GTPase hydrolysis rate. Involved in the addition of a carboxymethylaminomethyl (cmnm) group at the wobble position (U34) of certain tRNAs, forming tRNA-cmnm(5)s(2)U34. This is tRNA modification GTPase MnmE from Vibrio vulnificus (strain CMCP6).